The sequence spans 329 residues: 4-hydroxy-3-methylbut-2-enyl diphosphate reductase (329 aa).

Cys27 lines the [4Fe-4S] cluster pocket. (2E)-4-hydroxy-3-methylbut-2-enyl diphosphate contacts are provided by His56 and His89. Dimethylallyl diphosphate is bound by residues His56 and His89. Residues His56 and His89 each contribute to the isopentenyl diphosphate site. [4Fe-4S] cluster is bound at residue Cys111. Residue His139 participates in (2E)-4-hydroxy-3-methylbut-2-enyl diphosphate binding. His139 lines the dimethylallyl diphosphate pocket. Residue His139 coordinates isopentenyl diphosphate. Glu141 (proton donor) is an active-site residue. Thr179 is a (2E)-4-hydroxy-3-methylbut-2-enyl diphosphate binding site. Cys209 contributes to the [4Fe-4S] cluster binding site. (2E)-4-hydroxy-3-methylbut-2-enyl diphosphate-binding residues include Ser237, Ser238, Asn239, and Ser281. Ser237, Ser238, Asn239, and Ser281 together coordinate dimethylallyl diphosphate. Isopentenyl diphosphate-binding residues include Ser237, Ser238, Asn239, and Ser281.

Belongs to the IspH family. [4Fe-4S] cluster serves as cofactor.

The enzyme catalyses isopentenyl diphosphate + 2 oxidized [2Fe-2S]-[ferredoxin] + H2O = (2E)-4-hydroxy-3-methylbut-2-enyl diphosphate + 2 reduced [2Fe-2S]-[ferredoxin] + 2 H(+). It catalyses the reaction dimethylallyl diphosphate + 2 oxidized [2Fe-2S]-[ferredoxin] + H2O = (2E)-4-hydroxy-3-methylbut-2-enyl diphosphate + 2 reduced [2Fe-2S]-[ferredoxin] + 2 H(+). The protein operates within isoprenoid biosynthesis; dimethylallyl diphosphate biosynthesis; dimethylallyl diphosphate from (2E)-4-hydroxy-3-methylbutenyl diphosphate: step 1/1. Its pathway is isoprenoid biosynthesis; isopentenyl diphosphate biosynthesis via DXP pathway; isopentenyl diphosphate from 1-deoxy-D-xylulose 5-phosphate: step 6/6. Catalyzes the conversion of 1-hydroxy-2-methyl-2-(E)-butenyl 4-diphosphate (HMBPP) into a mixture of isopentenyl diphosphate (IPP) and dimethylallyl diphosphate (DMAPP). Acts in the terminal step of the DOXP/MEP pathway for isoprenoid precursor biosynthesis. The polypeptide is 4-hydroxy-3-methylbut-2-enyl diphosphate reductase (Methylibium petroleiphilum (strain ATCC BAA-1232 / LMG 22953 / PM1)).